A 560-amino-acid polypeptide reads, in one-letter code: Dihydroxy-acid dehydratase (560 aa).

Asp-80 contacts Mg(2+). Cys-121 is a [2Fe-2S] cluster binding site. Residues Asp-122 and Lys-123 each contribute to the Mg(2+) site. The residue at position 123 (Lys-123) is an N6-carboxylysine. A [2Fe-2S] cluster-binding site is contributed by Cys-194. Residue Glu-447 coordinates Mg(2+). The Proton acceptor role is filled by Ser-473.

This sequence belongs to the IlvD/Edd family. As to quaternary structure, homodimer. The cofactor is [2Fe-2S] cluster. Mg(2+) is required as a cofactor.

It catalyses the reaction (2R)-2,3-dihydroxy-3-methylbutanoate = 3-methyl-2-oxobutanoate + H2O. The catalysed reaction is (2R,3R)-2,3-dihydroxy-3-methylpentanoate = (S)-3-methyl-2-oxopentanoate + H2O. The protein operates within amino-acid biosynthesis; L-isoleucine biosynthesis; L-isoleucine from 2-oxobutanoate: step 3/4. It functions in the pathway amino-acid biosynthesis; L-valine biosynthesis; L-valine from pyruvate: step 3/4. Functions in the biosynthesis of branched-chain amino acids. Catalyzes the dehydration of (2R,3R)-2,3-dihydroxy-3-methylpentanoate (2,3-dihydroxy-3-methylvalerate) into 2-oxo-3-methylpentanoate (2-oxo-3-methylvalerate) and of (2R)-2,3-dihydroxy-3-methylbutanoate (2,3-dihydroxyisovalerate) into 2-oxo-3-methylbutanoate (2-oxoisovalerate), the penultimate precursor to L-isoleucine and L-valine, respectively. This is Dihydroxy-acid dehydratase from Chlorobaculum tepidum (strain ATCC 49652 / DSM 12025 / NBRC 103806 / TLS) (Chlorobium tepidum).